We begin with the raw amino-acid sequence, 612 residues long: Glutamine--fructose-6-phosphate aminotransferase [isomerizing] (612 aa).

C2 acts as the Nucleophile; for GATase activity in catalysis. The Glutamine amidotransferase type-2 domain maps to 2-221 (CGIVGIVSQR…NGDIAEITNS (220 aa)). 2 SIS domains span residues 289-429 (FNKT…IRKI) and 461-602 (LVKN…VDHP). K607 functions as the For Fru-6P isomerization activity in the catalytic mechanism.

Homodimer.

The protein localises to the cytoplasm. It carries out the reaction D-fructose 6-phosphate + L-glutamine = D-glucosamine 6-phosphate + L-glutamate. Functionally, catalyzes the first step in hexosamine metabolism, converting fructose-6P into glucosamine-6P using glutamine as a nitrogen source. In Wigglesworthia glossinidia brevipalpis, this protein is Glutamine--fructose-6-phosphate aminotransferase [isomerizing].